The primary structure comprises 204 residues: dITP/XTP pyrophosphatase (204 aa).

Threonine 7–lysine 12 serves as a coordination point for substrate. The Mg(2+) site is built by aspartate 38 and aspartate 74. Aspartate 74 functions as the Proton acceptor in the catalytic mechanism. Substrate-binding positions include serine 75, phenylalanine 156–aspartate 159, lysine 179, and histidine 184–arginine 185.

The protein belongs to the HAM1 NTPase family. In terms of assembly, homodimer. Mg(2+) is required as a cofactor.

The catalysed reaction is XTP + H2O = XMP + diphosphate + H(+). It catalyses the reaction dITP + H2O = dIMP + diphosphate + H(+). The enzyme catalyses ITP + H2O = IMP + diphosphate + H(+). Its function is as follows. Pyrophosphatase that catalyzes the hydrolysis of nucleoside triphosphates to their monophosphate derivatives, with a high preference for the non-canonical purine nucleotides XTP (xanthosine triphosphate), dITP (deoxyinosine triphosphate) and ITP. Seems to function as a house-cleaning enzyme that removes non-canonical purine nucleotides from the nucleotide pool, thus preventing their incorporation into DNA/RNA and avoiding chromosomal lesions. The chain is dITP/XTP pyrophosphatase from Campylobacter fetus subsp. fetus (strain 82-40).